A 132-amino-acid polypeptide reads, in one-letter code: Large ribosomal subunit protein bL21 (132 aa).

The disordered stretch occupies residues 104-132 (GKAPSIGPRPPREKKPVVETSAEADDAAA).

It belongs to the bacterial ribosomal protein bL21 family. Part of the 50S ribosomal subunit. Contacts protein L20.

This protein binds to 23S rRNA in the presence of protein L20. The polypeptide is Large ribosomal subunit protein bL21 (Rhodopseudomonas palustris (strain BisB18)).